Consider the following 404-residue polypeptide: uncharacterized protein (404 aa).

The next 12 membrane-spanning stretches (helical) occupy residues 16-36 (FAFF…QPLM), 49-69 (AASL…LVFG), 79-99 (PIMG…AFSP), 110-130 (IQGV…GEEI), 133-153 (GSLG…AVFG), 166-186 (WHMA…IFFI), 221-241 (FLIG…IVYV), 252-272 (AFSS…SFIG), 283-303 (ILVM…NNML), 307-327 (ILGI…ASSW), 342-362 (LYLF…GLFW), and 364-384 (GFHW…ALWL).

This sequence belongs to the major facilitator superfamily.

It is found in the cell membrane. This is an uncharacterized protein from Bacillus subtilis (strain 168).